The chain runs to 123 residues: Large ribosomal subunit protein bL12 (123 aa).

It belongs to the bacterial ribosomal protein bL12 family. Homodimer. Part of the ribosomal stalk of the 50S ribosomal subunit. Forms a multimeric L10(L12)X complex, where L10 forms an elongated spine to which 2 to 4 L12 dimers bind in a sequential fashion. Binds GTP-bound translation factors.

Forms part of the ribosomal stalk which helps the ribosome interact with GTP-bound translation factors. Is thus essential for accurate translation. The polypeptide is Large ribosomal subunit protein bL12 (Rhodopseudomonas palustris (strain HaA2)).